A 326-amino-acid chain; its full sequence is Small ribosomal subunit biogenesis GTPase RsgA (326 aa).

Residues 80-241 (LSHQMHIIAS…IIDTPGIKGF (162 aa)) enclose the CP-type G domain. GTP-binding positions include 129–132 (NKID) and 183–191 (GHSGVGKST). Zn(2+) is bound by residues Cys-265, Cys-270, His-272, and Cys-278.

It belongs to the TRAFAC class YlqF/YawG GTPase family. RsgA subfamily. In terms of assembly, monomer. Associates with 30S ribosomal subunit, binds 16S rRNA. The cofactor is Zn(2+).

It is found in the cytoplasm. One of several proteins that assist in the late maturation steps of the functional core of the 30S ribosomal subunit. Helps release RbfA from mature subunits. May play a role in the assembly of ribosomal proteins into the subunit. Circularly permuted GTPase that catalyzes slow GTP hydrolysis, GTPase activity is stimulated by the 30S ribosomal subunit. In Flavobacterium psychrophilum (strain ATCC 49511 / DSM 21280 / CIP 103535 / JIP02/86), this protein is Small ribosomal subunit biogenesis GTPase RsgA.